The primary structure comprises 748 residues: Cytosolic phospholipase A2 (748 aa).

Positions 1–178 are phospholipid binding; that stretch reads MSFIDPYQHI…MKKLLGPKKS (178 aa). Ser2 bears the Phosphoserine mark. The C2 domain maps to 6-122; the sequence is PYQHIIVEHQ…KVGEKKEVPF (117 aa). Ca(2+)-binding residues include Asp40, Thr41, Asp43, Asn65, Asp93, Ala94, and Asn95. The 600-residue stretch at 140–739 folds into the PLA2c domain; that stretch reads SCPDLRFSMA…SNVEARKFFN (600 aa). The active-site Nucleophile is the Ser228. Phosphothreonine is present on Thr268. Positions 427–458 are disordered; that stretch reads KHIVSNDSSDSDDEAQGPKGTENEEAEKEYQS. Ser434, Ser435, and Ser437 each carry phosphoserine. Residue Ser505 is modified to Phosphoserine; by MAPK. Ser515 carries the post-translational modification Phosphoserine. Residue Lys540 forms a Glycyl lysine isopeptide (Lys-Gly) (interchain with G-Cter in SUMO2) linkage. Catalysis depends on Asp548, which acts as the Proton acceptor. Lys605 is covalently cross-linked (Glycyl lysine isopeptide (Lys-Gly) (interchain with G-Cter in SUMO2)). 2 positions are modified to phosphoserine: Ser726 and Ser728.

As to quaternary structure, interacts with KAT5. Phosphorylated at both Ser-505 and Ser-726 in response to mitogenic stimuli. In terms of tissue distribution, expressed in various organs including uterus, kidney, spleen, liver, heart, lung and brain (at protein level).

It is found in the cytoplasm. Its subcellular location is the golgi apparatus membrane. It localises to the nucleus envelope. The enzyme catalyses a 1,2-diacyl-sn-glycero-3-phosphocholine + H2O = a 1-acyl-sn-glycero-3-phosphocholine + a fatty acid + H(+). It carries out the reaction a 1-O-alkyl-2-acyl-sn-glycero-3-phosphocholine + H2O = a 1-O-alkyl-sn-glycero-3-phosphocholine + a fatty acid + H(+). The catalysed reaction is a 1-acyl-sn-glycero-3-phosphocholine + H2O = sn-glycerol 3-phosphocholine + a fatty acid + H(+). It catalyses the reaction 1-hexadecanoyl-2-(5Z,8Z,11Z,14Z-eicosatetraenoyl)-sn-glycero-3-phosphocholine + H2O = 1-hexadecanoyl-sn-glycero-3-phosphocholine + (5Z,8Z,11Z,14Z)-eicosatetraenoate + H(+). The enzyme catalyses 1,2-di-(5Z,8Z,11Z,14Z-eicosatetraenoyl)-sn-glycero-3-phosphocholine + H2O = 1-(5Z,8Z,11Z,14Z-eicosatetraenoyl)-sn-glycero-3-phosphocholine + (5Z,8Z,11Z,14Z)-eicosatetraenoate + H(+). It carries out the reaction 1-octadecanoyl-2-(5Z,8Z,11Z,14Z-eicosatetraenoyl)-sn-glycero-3-phosphocholine + H2O = 1-octadecanoyl-sn-glycero-3-phosphocholine + (5Z,8Z,11Z,14Z)-eicosatetraenoate + H(+). The catalysed reaction is 1-hexadecanoyl-2-(9Z,12Z-octadecadienoyl)-sn-glycero-3-phosphocholine + H2O = (9Z,12Z)-octadecadienoate + 1-hexadecanoyl-sn-glycero-3-phosphocholine + H(+). It catalyses the reaction 1-octadecanoyl-2-(9Z,12Z,15Z-octadecatrienoyl)-sn-glycero-3-phosphocholine + H2O = (9Z,12Z,15Z)-octadecatrienoate + 1-octadecanoyl-sn-glycero-3-phosphocholine + H(+). The enzyme catalyses 1-(5Z,8Z,11Z,14Z-eicosatetraenoyl)-2-hexadecanoyl-sn-glycero-3-phosphocholine + H2O = 1-(5Z,8Z,11Z,14Z-eicosatetraenoyl)-sn-glycero-3-phosphocholine + hexadecanoate + H(+). It carries out the reaction 1-O-hexadecyl-2-(5Z,8Z,11Z,14Z)-eicosatetraenoyl-sn-glycero-3-phosphocholine + H2O = 1-O-hexadecyl-sn-glycero-3-phosphocholine + (5Z,8Z,11Z,14Z)-eicosatetraenoate + H(+). The catalysed reaction is 1,2-di-(9Z-octadecenoyl)-sn-glycero-3-phospho-(1'-sn-glycerol) + H2O = 1-(9Z-octadecenoyl)-sn-glycero-3-phospho-(1'-sn-glycerol) + (9Z)-octadecenoate + H(+). It catalyses the reaction 1-octadecanoyl-2-(5Z,8Z,11Z,14Z-eicosatetraenoyl)-sn-glycero-3-phosphate + H2O = 1-octadecanoyl-sn-glycero-3-phosphate + (5Z,8Z,11Z,14Z)-eicosatetraenoate + H(+). The enzyme catalyses 1-hexadecanoyl-sn-glycero-3-phosphocholine + H2O = sn-glycerol 3-phosphocholine + hexadecanoate + H(+). It carries out the reaction 2-(prostaglandin E2)-sn-glycero-3-phosphoethanolamine + H2O = sn-glycero-3-phosphoethanolamine + prostaglandin E2 + H(+). The catalysed reaction is 2-[(15S)-hydroxy-(5Z,8Z,11Z,13E)-eicosatetraenoyl]-sn-glycero-3-phosphocholine + H2O = (15S)-hydroxy-(5Z,8Z,11Z,13E)-eicosatetraenoate + sn-glycerol 3-phosphocholine + H(+). It catalyses the reaction 2-[(15R)-hydroxy-(5Z,8Z,11Z,13E)-eicosatetraenoyl]-sn-glycero-3-phosphocholine + H2O = (15R)-hydroxy-(5Z,8Z,11Z,13E)-eicosatetraenoate + sn-glycerol 3-phosphocholine + H(+). The enzyme catalyses 2-(prostaglandin E2)-sn-glycero-3-phosphocholine + H2O = prostaglandin E2 + sn-glycerol 3-phosphocholine + H(+). It carries out the reaction 2-[(11R)-hydroxy-(5Z,8Z,12E,14Z)-eicosatetraenoyl]-sn-glycero-3-phosphocholine + H2O = (11R)-hydroxy-(5Z,8Z,12E,14Z)-eicosatetraenoate + sn-glycerol 3-phosphocholine + H(+). The catalysed reaction is 1-(5Z,8Z,11Z,14Z-eicosatetraenoyl)-2-O-hexadecyl-sn-glycero-3-phosphocholine + H2O = 2-O-hexadecyl-sn-glycero-3-phosphocholine + (5Z,8Z,11Z,14Z)-eicosatetraenoate + H(+). It catalyses the reaction 1-octadecanoyl-2-(5Z,8Z,11Z,14Z-eicosatetraenoyl)-sn-glycero-3-phosphocholine + glycerol = 1-(5Z,8Z,11Z,14Z-eicosatetraenoyl)-glycerol + 1-octadecanoyl-sn-glycero-3-phosphocholine. The enzyme catalyses 1-octadecanoyl-2-(9Z,12Z,15Z-octadecatrienoyl)-sn-glycero-3-phosphocholine + glycerol = 1-(9Z,12Z,15Z-octadecatrienoyl)-glycerol + 1-octadecanoyl-sn-glycero-3-phosphocholine. The protein operates within membrane lipid metabolism; glycerophospholipid metabolism. It functions in the pathway lipid metabolism; arachidonate metabolism. Its pathway is lipid metabolism; prostaglandin biosynthesis. It participates in lipid metabolism; leukotriene B4 biosynthesis. Activated by cytosolic calcium, which is necessary for binding to membrane lipids. Activated by phosphorylation in response to mitogenic stimuli. Stimulated by agonists such as ATP and thrombin. Has primarily calcium-dependent phospholipase and lysophospholipase activities, with a major role in membrane lipid remodeling and biosynthesis of lipid mediators of the inflammatory response. Plays an important role in embryo implantation and parturition through its ability to trigger prostanoid production. Preferentially hydrolyzes the ester bond of the fatty acyl group attached at sn-2 position of phospholipids (phospholipase A2 activity). Selectively hydrolyzes sn-2 arachidonoyl group from membrane phospholipids, providing the precursor for eicosanoid biosynthesis via the cyclooxygenase pathway. In an alternative pathway of eicosanoid biosynthesis, hydrolyzes sn-2 fatty acyl chain of eicosanoid lysophopholipids to release free bioactive eicosanoids. Hydrolyzes the ester bond of the fatty acyl group attached at sn-1 position of phospholipids (phospholipase A1 activity) only if an ether linkage rather than an ester linkage is present at the sn-2 position. This hydrolysis is not stereospecific. Has calcium-independent phospholipase A2 and lysophospholipase activities in the presence of phosphoinositides. Has O-acyltransferase activity. Catalyzes the transfer of fatty acyl chains from phospholipids to a primary hydroxyl group of glycerol (sn-1 or sn-3), potentially contributing to monoacylglycerol synthesis. This is Cytosolic phospholipase A2 (Pla2g4a) from Mus musculus (Mouse).